The sequence spans 107 residues: Phosphoribosyl-ATP pyrophosphatase (107 aa).

The protein belongs to the PRA-PH family.

The protein localises to the cytoplasm. The catalysed reaction is 1-(5-phospho-beta-D-ribosyl)-ATP + H2O = 1-(5-phospho-beta-D-ribosyl)-5'-AMP + diphosphate + H(+). It participates in amino-acid biosynthesis; L-histidine biosynthesis; L-histidine from 5-phospho-alpha-D-ribose 1-diphosphate: step 2/9. This Brucella abortus (strain S19) protein is Phosphoribosyl-ATP pyrophosphatase.